A 593-amino-acid chain; its full sequence is UvrABC system protein C (593 aa).

The GIY-YIG domain maps to 14 to 91; that stretch reads DSPGCYLHKD…IQENMPKYNI (78 aa). One can recognise a UVR domain in the interval 196-231; that stretch reads NKIVNGLTEKMKSAAMTMEFERAAEYRDLIEAISLL.

It belongs to the UvrC family. As to quaternary structure, interacts with UvrB in an incision complex.

Its subcellular location is the cytoplasm. Its function is as follows. The UvrABC repair system catalyzes the recognition and processing of DNA lesions. UvrC both incises the 5' and 3' sides of the lesion. The N-terminal half is responsible for the 3' incision and the C-terminal half is responsible for the 5' incision. In Streptococcus agalactiae serotype III (strain NEM316), this protein is UvrABC system protein C.